The chain runs to 351 residues: UDP-3-O-acylglucosamine N-acyltransferase (351 aa).

Histidine 257 acts as the Proton acceptor in catalysis.

Belongs to the transferase hexapeptide repeat family. LpxD subfamily. As to quaternary structure, homotrimer.

It catalyses the reaction a UDP-3-O-[(3R)-3-hydroxyacyl]-alpha-D-glucosamine + a (3R)-hydroxyacyl-[ACP] = a UDP-2-N,3-O-bis[(3R)-3-hydroxyacyl]-alpha-D-glucosamine + holo-[ACP] + H(+). It participates in bacterial outer membrane biogenesis; LPS lipid A biosynthesis. In terms of biological role, catalyzes the N-acylation of UDP-3-O-acylglucosamine using 3-hydroxyacyl-ACP as the acyl donor. Is involved in the biosynthesis of lipid A, a phosphorylated glycolipid that anchors the lipopolysaccharide to the outer membrane of the cell. The sequence is that of UDP-3-O-acylglucosamine N-acyltransferase from Brucella abortus (strain S19).